The primary structure comprises 183 residues: Hypoxanthine/guanine phosphoribosyltransferase (183 aa).

It belongs to the purine/pyrimidine phosphoribosyltransferase family. Archaeal HPRT subfamily. Homodimer.

The protein localises to the cytoplasm. The enzyme catalyses IMP + diphosphate = hypoxanthine + 5-phospho-alpha-D-ribose 1-diphosphate. The catalysed reaction is GMP + diphosphate = guanine + 5-phospho-alpha-D-ribose 1-diphosphate. The protein operates within purine metabolism; IMP biosynthesis via salvage pathway; IMP from hypoxanthine: step 1/1. Functionally, catalyzes a salvage reaction resulting in the formation of IMP that is energically less costly than de novo synthesis. In Methanothermococcus okinawensis (strain DSM 14208 / JCM 11175 / IH1), this protein is Hypoxanthine/guanine phosphoribosyltransferase.